Consider the following 441-residue polypeptide: Malate dehydrogenase [NADP], chloroplastic (441 aa).

The transit peptide at 1 to 51 (MAVAELSPSYKTQLKTCQQLSSSLSTRLSDHRKFSLRLLPRPVSVRGGIRC) directs the protein to the chloroplast. A disulfide bridge connects residues cysteine 75 and cysteine 80. An NADP(+)-binding site is contributed by 104-110 (GAAGMIS). Substrate-binding residues include arginine 185 and arginine 191. Residue asparagine 198 participates in NADP(+) binding. Glutamine 205 is a binding site for NAD(+). 222-224 (VGN) contributes to the NADP(+) binding site. Positions 224 and 255 each coordinate substrate. The Proton acceptor role is filled by histidine 280. A disulfide bridge links cysteine 416 with cysteine 428.

This sequence belongs to the LDH/MDH superfamily. MDH type 2 family. Homodimer.

The protein localises to the plastid. Its subcellular location is the chloroplast. It catalyses the reaction (S)-malate + NADP(+) = oxaloacetate + NADPH + H(+). With respect to regulation, chloroplast NADP-MDH is activated upon illumination. In order to be enzymatically active, disulfide bridges on the protein must be reduced by thioredoxin which receives electrons from ferredoxin and the electron transport system of photosynthesis. The chloroplastic, NADP-dependent form is essential for the photosynthesis C4 cycle, which allows plants to circumvent the problem of photorespiration. In C4 plants, NADP-MDH activity acts to convert oxaloacetate to malate in chloroplasts of mesophyll cells for transport to the bundle sheath cells. This is Malate dehydrogenase [NADP], chloroplastic (MDH1) from Mesembryanthemum crystallinum (Common ice plant).